The primary structure comprises 308 residues: Elongation factor Ts (308 aa).

Residues 80 to 83 (TDFV) are involved in Mg(2+) ion dislocation from EF-Tu.

Belongs to the EF-Ts family.

The protein localises to the cytoplasm. Functionally, associates with the EF-Tu.GDP complex and induces the exchange of GDP to GTP. It remains bound to the aminoacyl-tRNA.EF-Tu.GTP complex up to the GTP hydrolysis stage on the ribosome. This chain is Elongation factor Ts, found in Rhodopseudomonas palustris (strain BisB18).